The sequence spans 178 residues: ATP-dependent protease subunit HslV (178 aa).

The active site involves T2. Na(+) is bound by residues S159, C162, and T165.

This sequence belongs to the peptidase T1B family. HslV subfamily. A double ring-shaped homohexamer of HslV is capped on each side by a ring-shaped HslU homohexamer. The assembly of the HslU/HslV complex is dependent on binding of ATP.

The protein localises to the cytoplasm. The enzyme catalyses ATP-dependent cleavage of peptide bonds with broad specificity.. Its activity is regulated as follows. Allosterically activated by HslU binding. In terms of biological role, protease subunit of a proteasome-like degradation complex believed to be a general protein degrading machinery. The polypeptide is ATP-dependent protease subunit HslV (Buchnera aphidicola subsp. Cinara cedri (strain Cc)).